The sequence spans 493 residues: Protein translocase subunit SecY (493 aa).

Topologically, residues 1 to 21 (MDSVIRALQPYFERIPSVERP) are cytoplasmic. Residues 22 to 48 (KGHVHFREKFGWTAAILLLYFILSNVP) traverse the membrane as a helical segment. The Extracellular portion of the chain corresponds to 49–59 (VFGLSPESIDI). Residues 60–67 (FAAYRALF) constitute an intramembrane region (helical). A discontinuously helical transmembrane segment spans residues 60–88 (FAAYRALFAGSTGSIIALGIGPIVTASII). Residues 68 to 79 (AGSTGSIIALGI) lie within the membrane without spanning it. An intramembrane region (helical) is located at residues 80–88 (GPIVTASII). Topologically, residues 89 to 109 (LQLLVGAGIIKLDLTNPEDRA) are cytoplasmic. Residues 110–134 (AYQDFQRFLVFVMIAVEAIPQIAGG) traverse the membrane as a helical segment. Residues 135–151 (LLKPDLNLAAQLGVSPG) lie on the Extracellular side of the membrane. The helical transmembrane segment at 152–176 (IISFLIFIQLFIGGVLIVYMDEVVS) threads the bilayer. Topologically, residues 177–182 (KWGIGS) are cytoplasmic. Residues 183 to 201 (GVSLFILAGIAQSIVVGLF) traverse the membrane as a helical segment. Over 202 to 244 (NWVIPPNSAMPAGIIPRWIWIAQNYPLDQLFTGSGLAFLLIQG) the chain is Extracellular. Residues 245-266 (GILALITTAAIILLVVFFEGTR) form a helical membrane-spanning segment. The Cytoplasmic segment spans residues 267–291 (VEIPLAHAVARGARGRFPIKLIYAS). Residues 292 to 313 (VLPMIFVRALQANVVALGQVLH) traverse the membrane as a helical segment. Residues 314-367 (ARGVTIFGEFVNGKAVSGLMFFLQPVSSPYDWIPSLVKSQGAAFAAIPDWMIYL) are Extracellular-facing. The helical transmembrane segment at 368-387 (HLLIDALILVVGGIIFAWFW) threads the bilayer. Residues 388–430 (VETSGMDARTVASQIAKSGMQVPGFRKSPQVLERVLSRYIPKV) lie on the Cytoplasmic side of the membrane. A helical membrane pass occupies residues 431 to 449 (TILGGAIIGILTLVANMLG). The Extracellular portion of the chain corresponds to 450–454 (TIGNV). A helical transmembrane segment spans residues 455 to 469 (SGTGLLLAVSIAYRF). Residues 470–493 (YEDLAKEQLTEMHPLIRRMLGEEA) lie on the Cytoplasmic side of the membrane.

It belongs to the SecY/SEC61-alpha family. Component of the Sec protein translocase complex. Heterotrimer consisting of alpha (SecY), beta (SecG) and gamma (SecE) subunits. The heterotrimers can form oligomers, although 1 heterotrimer is thought to be able to translocate proteins. Interacts with the ribosome. May interact with SecDF, and other proteins may be involved.

Its subcellular location is the cell membrane. The central subunit of the protein translocation channel SecYEG. Consists of two halves formed by TMs 1-5 and 6-10. These two domains form a lateral gate at the front which open onto the bilayer between TMs 2 and 7, and are clamped together by SecE at the back. The channel is closed by both a pore ring composed of hydrophobic SecY resides and a short helix (helix 2A) on the extracellular side of the membrane which forms a plug. The plug probably moves laterally to allow the channel to open. The ring and the pore may move independently. This is Protein translocase subunit SecY from Archaeoglobus fulgidus (strain ATCC 49558 / DSM 4304 / JCM 9628 / NBRC 100126 / VC-16).